Reading from the N-terminus, the 367-residue chain is F-box only protein 25 (367 aa).

Residues 1-83 (MPFLGQDWRS…NDTNTQSFYR (83 aa)) form an interaction with beta-actin region. Residues 226–274 (LTLSDLPLHMLNNILYRFSDGWDIITLGQVTPTLYMLSEDRQLWKKLCQ) form the F-box domain.

In terms of assembly, part of a SCF (SKP1-cullin-F-box) protein ligase complex consisting of FBXO25, SKP1, CUL1 and RBX1. Interacts directly with SKP1 and CUL1. Interacts (via C-terminus) with beta-actin (via N-terminus). In terms of tissue distribution, expressed in all brain tissue observed.

It is found in the nucleus. Its pathway is protein modification; protein ubiquitination. Substrate-recognition component of the SCF (SKP1-CUL1-F-box protein)-type E3 ubiquitin ligase complex. May play a role in accumulation of expanded polyglutamine (polyQ) protein huntingtin (HTT). This is F-box only protein 25 (FBXO25) from Homo sapiens (Human).